A 688-amino-acid polypeptide reads, in one-letter code: Glycine--tRNA ligase beta subunit (688 aa).

It belongs to the class-II aminoacyl-tRNA synthetase family. In terms of assembly, tetramer of two alpha and two beta subunits.

The protein localises to the cytoplasm. It catalyses the reaction tRNA(Gly) + glycine + ATP = glycyl-tRNA(Gly) + AMP + diphosphate. This chain is Glycine--tRNA ligase beta subunit, found in Syntrophotalea carbinolica (strain DSM 2380 / NBRC 103641 / GraBd1) (Pelobacter carbinolicus).